The chain runs to 1050 residues: Bifunctional glutamine synthetase adenylyltransferase/adenylyl-removing enzyme (1050 aa).

Residues 1 to 531 form an adenylyl removase region; it reads MTDPLIHTRK…LHSQLFYRPL (531 aa). An adenylyl transferase region spans residues 537–1050; it reads NLSVDAMKLS…LDSVEARREL (514 aa).

Belongs to the GlnE family. Requires Mg(2+) as cofactor.

It catalyses the reaction [glutamine synthetase]-O(4)-(5'-adenylyl)-L-tyrosine + phosphate = [glutamine synthetase]-L-tyrosine + ADP. It carries out the reaction [glutamine synthetase]-L-tyrosine + ATP = [glutamine synthetase]-O(4)-(5'-adenylyl)-L-tyrosine + diphosphate. In terms of biological role, involved in the regulation of glutamine synthetase GlnA, a key enzyme in the process to assimilate ammonia. When cellular nitrogen levels are high, the C-terminal adenylyl transferase (AT) inactivates GlnA by covalent transfer of an adenylyl group from ATP to specific tyrosine residue of GlnA, thus reducing its activity. Conversely, when nitrogen levels are low, the N-terminal adenylyl removase (AR) activates GlnA by removing the adenylyl group by phosphorolysis, increasing its activity. The regulatory region of GlnE binds the signal transduction protein PII (GlnB) which indicates the nitrogen status of the cell. The sequence is that of Bifunctional glutamine synthetase adenylyltransferase/adenylyl-removing enzyme from Corynebacterium efficiens (strain DSM 44549 / YS-314 / AJ 12310 / JCM 11189 / NBRC 100395).